The following is a 430-amino-acid chain: Cell division protein FtsZ (430 aa).

GTP-binding positions include 76 to 80 (GGGCN), 163 to 165 (GTG), Glu-194, Arg-198, and Asp-242. Positions 374–418 (KEKPQAKTSSKPVLSGPPAGVETVPSTTTPEDPLGEIPMAPELDI) are disordered.

The protein belongs to the FtsZ family. Homodimer. Polymerizes to form a dynamic ring structure in a strictly GTP-dependent manner. Interacts directly with several other division proteins.

Its subcellular location is the cytoplasm. Essential cell division protein that forms a contractile ring structure (Z ring) at the future cell division site. The regulation of the ring assembly controls the timing and the location of cell division. One of the functions of the FtsZ ring is to recruit other cell division proteins to the septum to produce a new cell wall between the dividing cells. Binds GTP and shows GTPase activity. The sequence is that of Cell division protein FtsZ from Synechocystis sp. (strain ATCC 27184 / PCC 6803 / Kazusa).